We begin with the raw amino-acid sequence, 251 residues long: YlmG homolog protein 2, chloroplastic (251 aa).

Residues 1 to 51 (MEASANEPAMKSLKSNPSGPIPNFFVSLSSAFTQTPLVRSNKPNLLLLPPV) constitute a chloroplast transit peptide. 2 helical membrane passes run 119 to 139 (GFAAVLPGDSVAGLVVANGLI) and 183 to 203 (FIPPLGGLDLSPILAFLVLNA). The span at 232–243 (VRRRRLSSHKDH) shows a compositional bias: basic residues. The disordered stretch occupies residues 232 to 251 (VRRRRLSSHKDHRPSSASMT).

This sequence belongs to the YggT family.

Its subcellular location is the plastid. It localises to the chloroplast thylakoid membrane. Not required for the biogenesis and accumulation of native cytochrome b6 in the thylakoid membrane. Not functionally involved in the pathway for covalent binding of the c-type heme to cytochrome b6. In Arabidopsis thaliana (Mouse-ear cress), this protein is YlmG homolog protein 2, chloroplastic.